Consider the following 97-residue polypeptide: Protein S100-A10 (97 aa).

Lysine 23, lysine 28, lysine 54, and lysine 57 each carry N6-acetyllysine. An EF-hand domain is found at 47 to 82; the sequence is KDPLAVDKIMKDLDQCRDGKVGFQSFLSLVAGLTIA. The segment at 60–71 is ancestral calcium site; the sequence is DQCRDGKVGFQS.

Belongs to the S-100 family. In terms of assembly, heterotetramer containing 2 light chains of S100A10/p11 and 2 heavy chains of ANXA2/p36. Interacts with SCN10A. Interacts with TASOR.

In terms of biological role, because S100A10 induces the dimerization of ANXA2/p36, it may function as a regulator of protein phosphorylation in that the ANXA2 monomer is the preferred target (in vitro) of tyrosine-specific kinase. This is Protein S100-A10 (S100a10) from Mus musculus (Mouse).